The following is a 93-amino-acid chain: Large ribosomal subunit protein uL23 (93 aa).

It belongs to the universal ribosomal protein uL23 family. As to quaternary structure, part of the 50S ribosomal subunit. Contacts protein L29, and trigger factor when it is bound to the ribosome.

One of the early assembly proteins it binds 23S rRNA. One of the proteins that surrounds the polypeptide exit tunnel on the outside of the ribosome. Forms the main docking site for trigger factor binding to the ribosome. The polypeptide is Large ribosomal subunit protein uL23 (Campylobacter fetus subsp. fetus (strain 82-40)).